Reading from the N-terminus, the 632-residue chain is tRNA endonuclease VMS1 (632 aa).

The C2H2-type zinc-finger motif lies at 72-96 (MRCSVCQMSFDSRNEQKAHYQTDYH). A disordered region spans residues 123-155 (HGIKSEDENSGGEQTSSDHEESEEASDRDPDLQ). The 161-residue stretch at 232–392 (PMAISALFMV…KKAWCELSYL (161 aa)) folds into the VLRF1 domain. Glutamine 295 is an active-site residue. ANK repeat units follow at residues 470–500 (LTPT…DPTI) and 504–530 (LGRT…NLGE). Coiled coils occupy residues 544–582 (LSRE…QRFA) and 608–632 (TDEQ…KKKY). Positions 578-589 (KQRFAKDAERGP) are enriched in basic and acidic residues. Residues 578 to 632 (KQRFAKDAERGPGKKLTNIPSIQQQNLNSLTDEQRRRLMREQRARAAEERMKKKY) form a disordered region. Residues 595–608 (NIPSIQQQNLNSLT) show a composition bias toward polar residues. A compositionally biased stretch (basic and acidic residues) spans 609 to 632 (DEQRRRLMREQRARAAEERMKKKY).

It belongs to the ANKZF1/VMS1 family. As to quaternary structure, associates with 60S ribosomal subunit. Interacts with CDC48. Interacts with NPL4.

It is found in the cytoplasm. The protein localises to the mitochondrion. Its subcellular location is the endoplasmic reticulum membrane. Endonuclease that cleaves polypeptidyl-tRNAs downstream of the ribosome-associated quality control (RQC) pathway to release incompletely synthesized polypeptides for degradation. The RQC pathway disassembles aberrantly stalled translation complexes to recycle or degrade the constituent parts. VMS1 acts downstream disassembly of stalled ribosomes and specifically cleaves off the terminal 3'-CCA nucleotides universal to all tRNAs from polypeptidyl-tRNAs, releasing (1) ubiquitinated polypeptides from 60S ribosomal subunit for degradation by the ERAD pathway and (2) cleaved tRNAs for recycling. Component of an evolutionarily conserved system for ubiquitin-mediated mitochondria-associated protein degradation (MAD), which is necessary to maintain mitochondrial, cellular, and organismal viability. The sequence is that of tRNA endonuclease VMS1 from Saccharomyces cerevisiae (strain ATCC 204508 / S288c) (Baker's yeast).